The chain runs to 201 residues: Peptide deformylase (201 aa).

Residues 1–34 are disordered; the sequence is MSLNFAAMARQSERQASTVMVPKGEEQPESPKIH. Positions 23–32 are enriched in basic and acidic residues; sequence KGEEQPESPK. The Fe cation site is built by Cys121 and His163. The active site involves Glu164. Fe cation is bound at residue His167.

It belongs to the polypeptide deformylase family. Fe(2+) serves as cofactor.

The catalysed reaction is N-terminal N-formyl-L-methionyl-[peptide] + H2O = N-terminal L-methionyl-[peptide] + formate. Functionally, removes the formyl group from the N-terminal Met of newly synthesized proteins. Requires at least a dipeptide for an efficient rate of reaction. N-terminal L-methionine is a prerequisite for activity but the enzyme has broad specificity at other positions. This chain is Peptide deformylase, found in Synechococcus sp. (strain RCC307).